We begin with the raw amino-acid sequence, 189 residues long: UPF0301 protein A1C_00165 (189 aa).

It belongs to the UPF0301 (AlgH) family.

The protein is UPF0301 protein A1C_00165 of Rickettsia akari (strain Hartford).